Reading from the N-terminus, the 703-residue chain is Stonustoxin subunit alpha (703 aa).

The segment at 2–265 (SSDLVMPALG…KAQQLIQEIN (264 aa)) is structural MACPF/CDC pore-forming domain. The segment at 266–385 (VSKVRRIHTT…GMVEGTQAKF (120 aa)) is structural FAT domain. The tract at residues 386–517 (VSNQTELDRE…PRMPFVQGYK (132 aa)) is thioredoxin (THX) domain. In terms of domain architecture, B30.2/SPRY spans 508–703 (PRMPFVQGYK…AGNHGTLRLL (196 aa)).

This sequence belongs to the SNTX/VTX toxin family. As to quaternary structure, heterodimer of alpha and beta subunits; non-covalently linked. Post-translationally, intrachain disulfide bonds may be present in the heterodimer. In terms of processing, not glycosylated. As to expression, expressed by the venom gland.

The protein resides in the secreted. Its function is as follows. This lethal (towards mammals) heterodimer induces hemolytic activities due to its ability to form pores in the cell membrane. The pore may be composed of 10 SNTX-alpha/beta heterodimers. The toxin elicits potent hypotension which is endothelium-dependent and appears to be mediated by the nitric oxide pathway and activation of potassium channels. In addition, it displays edema-inducing activities, increases vascular permeability. It also shows myotoxic activities and interferes irreversibly with neuromuscular function. It also induces irreversible platelet aggregation in rabbit or rat (but not in human or mouse) whole blood. In addition, it has been observed to increase spontaneous quantal acetylcholine release from isolated frog cutaneous pectoris motor endings. The protein is Stonustoxin subunit alpha of Synanceia horrida (Estuarine stonefish).